Consider the following 117-residue polypeptide: NADH-quinone oxidoreductase subunit A (117 aa).

3 helical membrane-spanning segments follow: residues 4-24, 64-84, and 86-106; these read WIGVALFIVVGIVFGAGGMLT, LMFVIFDVEVIYLYPWAVSFV, and LGLAGLIKMFLFIFILVLGLW.

It belongs to the complex I subunit 3 family. As to quaternary structure, NDH-1 is composed of 14 different subunits. Subunits NuoA, H, J, K, L, M, N constitute the membrane sector of the complex.

Its subcellular location is the cell membrane. It catalyses the reaction a quinone + NADH + 5 H(+)(in) = a quinol + NAD(+) + 4 H(+)(out). Its function is as follows. NDH-1 shuttles electrons from NADH, via FMN and iron-sulfur (Fe-S) centers, to quinones in the respiratory chain. The immediate electron acceptor for the enzyme in this species is believed to be a menaquinone. Couples the redox reaction to proton translocation (for every two electrons transferred, four hydrogen ions are translocated across the cytoplasmic membrane), and thus conserves the redox energy in a proton gradient. The sequence is that of NADH-quinone oxidoreductase subunit A from Desulforamulus reducens (strain ATCC BAA-1160 / DSM 100696 / MI-1) (Desulfotomaculum reducens).